A 209-amino-acid polypeptide reads, in one-letter code: Probable GTP-binding protein EngB (209 aa).

In terms of domain architecture, EngB-type G spans 22–198; that stretch reads TPLEIAFVGR…NRTVGSWLDA (177 aa). Mg(2+) contacts are provided by S37 and T59.

This sequence belongs to the TRAFAC class TrmE-Era-EngA-EngB-Septin-like GTPase superfamily. EngB GTPase family. Mg(2+) serves as cofactor.

Functionally, necessary for normal cell division and for the maintenance of normal septation. This is Probable GTP-binding protein EngB from Neisseria meningitidis serogroup B (strain ATCC BAA-335 / MC58).